Here is a 521-residue protein sequence, read N- to C-terminus: Histidine--tRNA ligase (521 aa).

Residues 137 to 139, arginine 164, glutamine 180, aspartate 184, arginine 338, and 342 to 343 each bind L-histidine; these read DLT and YY.

Belongs to the class-II aminoacyl-tRNA synthetase family.

It catalyses the reaction tRNA(His) + L-histidine + ATP = L-histidyl-tRNA(His) + AMP + diphosphate + H(+). In terms of biological role, involved in protein synthesis. Catalyzes the specific attachment of an amino acid to its cognate tRNA in a 2 step reaction: the amino acid (AA) is first activated by ATP to form AA-AMP and then transferred to the acceptor end of the tRNA. Required for germ cell development. In Caenorhabditis elegans, this protein is Histidine--tRNA ligase.